The chain runs to 250 residues: Leucyl/phenylalanyl-tRNA--protein transferase (250 aa).

This sequence belongs to the L/F-transferase family.

Its subcellular location is the cytoplasm. The enzyme catalyses N-terminal L-lysyl-[protein] + L-leucyl-tRNA(Leu) = N-terminal L-leucyl-L-lysyl-[protein] + tRNA(Leu) + H(+). It carries out the reaction N-terminal L-arginyl-[protein] + L-leucyl-tRNA(Leu) = N-terminal L-leucyl-L-arginyl-[protein] + tRNA(Leu) + H(+). The catalysed reaction is L-phenylalanyl-tRNA(Phe) + an N-terminal L-alpha-aminoacyl-[protein] = an N-terminal L-phenylalanyl-L-alpha-aminoacyl-[protein] + tRNA(Phe). Functionally, functions in the N-end rule pathway of protein degradation where it conjugates Leu, Phe and, less efficiently, Met from aminoacyl-tRNAs to the N-termini of proteins containing an N-terminal arginine or lysine. This is Leucyl/phenylalanyl-tRNA--protein transferase from Xanthomonas oryzae pv. oryzae (strain MAFF 311018).